The sequence spans 47 residues: Defensin-2 (47 aa).

Cystine bridges form between C3/C47, C14/C35, C20/C41, and C24/C43.

This sequence belongs to the DEFL family. As to expression, epidermis and vascular bundles of pods, stems, roots, leaves and wet or dry seeds.

Functionally, possesses antifungal activity sensitive to inorganic cations. This is Defensin-2 from Pisum sativum (Garden pea).